Here is a 532-residue protein sequence, read N- to C-terminus: Eukaryotic translation initiation factor 3 subunit D (532 aa).

Positions 108 to 161 (ATVLKTRGGAPRGGSFAGRGGSQRGGRFQNQPGRGPVGGQRGPNPRFGKSKFGW) are disordered. Residues 117-131 (APRGGSFAGRGGSQR) show a composition bias toward gly residues. Positions 132 to 141 (GGRFQNQPGR) are enriched in low complexity. The interval 296 to 310 (PLDFITVDENAADPP) is RNA gate.

Belongs to the eIF-3 subunit D family. As to quaternary structure, component of the eukaryotic translation initiation factor 3 (eIF-3) complex.

It is found in the cytoplasm. Functionally, mRNA cap-binding component of the eukaryotic translation initiation factor 3 (eIF-3) complex, which is involved in protein synthesis of a specialized repertoire of mRNAs and, together with other initiation factors, stimulates binding of mRNA and methionyl-tRNAi to the 40S ribosome. The eIF-3 complex specifically targets and initiates translation of a subset of mRNAs involved in cell proliferation. In the eIF-3 complex, eif3d specifically recognizes and binds the 7-methylguanosine cap of a subset of mRNAs. This chain is Eukaryotic translation initiation factor 3 subunit D, found in Yarrowia lipolytica (strain CLIB 122 / E 150) (Yeast).